Reading from the N-terminus, the 1125-residue chain is Angiopoietin-1 receptor (1125 aa).

Residues 1–22 (MDSLAGLVLCGVSLLLSATVDG) form the signal peptide. At 23 to 748 (AMDLILINSL…PADLGGRKML (726 aa)) the chain is on the extracellular side. An intrachain disulfide couples C44 to C102. An Ig-like C2-type 1 domain is found at 44–123 (CIASGWRPHE…RTMKMRQQAS (80 aa)). N-linked (GlcNAc...) asparagine glycosylation is present at N158. 3 consecutive EGF-like domains span residues 210–252 (RCEA…RTCE), 254–299 (ACEP…LQCN), and 301–341 (ACQP…LQCE). 13 cysteine pairs are disulfide-bonded: C211–C220, C224–C233, C227–C240, C242–C251, C255–C264, C268–C274, C280–C287, C289–C298, C302–C311, C315–C323, C317–C329, C331–C340, and C370–C424. An Ig-like C2-type 2 domain is found at 350-440 (PKIEDLPDHI…GMVEKPFNIS (91 aa)). 3 consecutive Fibronectin type-III domains span residues 447–541 (PLNA…TASI), 545–637 (PPRG…TLSD), and 642–735 (QPEN…TLSE). The helical transmembrane segment at 749–769 (LIAILGSAGMTCLTVLLAFLI) threads the bilayer. Over 770–1125 (MLQLKRANVQ…GIDCSAEEAA (356 aa)) the chain is Cytoplasmic. Residues 825-1097 (IKFQDVIGEG…QILVSLNRML (273 aa)) form the Protein kinase domain. ATP is bound by residues 831–839 (IGEGNFGQV) and K856. A Phosphotyrosine; by autocatalysis modification is found at Y861. D965 (proton acceptor) is an active-site residue. 3 positions are modified to phosphotyrosine; by autocatalysis: Y993, Y1103, and Y1109.

It belongs to the protein kinase superfamily. Tyr protein kinase family. Tie subfamily. In terms of assembly, homodimer. Heterodimer with TIE1. Interacts with ANGPT1, ANGPT2 and ANGPT4. At cell-cell contacts in quiescent cells, forms a signaling complex composed of ANGPT1 plus TEK molecules from two adjoining cells. In the absence of endothelial cell-cell contacts, interaction with ANGPT1 mediates contacts with the extracellular matrix. Interacts (tyrosine phosphorylated) with TNIP2. Interacts (tyrosine phosphorylated) with SHC1 (via SH2 domain). Interacts with PTPRB; this promotes endothelial cell-cell adhesion. Interacts with DOK2, GRB2, GRB7, GRB14, PIK3R1 and PTPN11/SHP2. Colocalizes with DOK2 at contacts with the extracellular matrix in migrating cells. Post-translationally, proteolytic processing leads to the shedding of the extracellular domain (soluble TIE-2 alias sTIE-2). Autophosphorylated on tyrosine residues in response to ligand binding. Autophosphorylation occurs in trans, i.e. one subunit of the dimeric receptor phosphorylates tyrosine residues on the other subunit. Autophosphorylation occurs in a sequential manner, where Tyr-993 in the kinase activation loop is phosphorylated first, followed by autophosphorylation at Tyr-1109 and at additional tyrosine residues. ANGPT1-induced phosphorylation is impaired during hypoxia, due to increased expression of ANGPT2. Phosphorylation is important for interaction with GRB14, PIK3R1 and PTPN11. Phosphorylation at Tyr-1103 is important for interaction with GRB2 and GRB7. Phosphorylation at Tyr-1109 is important for interaction with DOK2 and for coupling to downstream signal transduction pathways in endothelial cells. Dephosphorylated by PTPRB. In terms of processing, ubiquitinated. The phosphorylated receptor is ubiquitinated and internalized, leading to its degradation. Specifically expressed in developing vascular endothelial cells.

It localises to the cell membrane. It is found in the cell junction. The protein resides in the focal adhesion. Its subcellular location is the cytoplasm. The protein localises to the cytoskeleton. It localises to the secreted. It catalyses the reaction L-tyrosyl-[protein] + ATP = O-phospho-L-tyrosyl-[protein] + ADP + H(+). Angiopoietin binding leads to receptor dimerization and activation by autophosphorylation at Tyr-993 on the kinase activation loop. Its function is as follows. Tyrosine-protein kinase that acts as a cell-surface receptor for ANGPT1, ANGPT2 and ANGPT4 and regulates angiogenesis, endothelial cell survival, proliferation, migration, adhesion and cell spreading, reorganization of the actin cytoskeleton, but also maintenance of vascular quiescence. Has anti-inflammatory effects by preventing the leakage of pro-inflammatory plasma proteins and leukocytes from blood vessels. Required for normal angiogenesis and heart development during embryogenesis. Required for post-natal hematopoiesis. After birth, activates or inhibits angiogenesis, depending on the context. Inhibits angiogenesis and promotes vascular stability in quiescent vessels, where endothelial cells have tight contacts. In quiescent vessels, ANGPT1 oligomers recruit TEK to cell-cell contacts, forming complexes with TEK molecules from adjoining cells, and this leads to preferential activation of phosphatidylinositol 3-kinase and the AKT1 signaling cascades. In migrating endothelial cells that lack cell-cell adhesions, ANGT1 recruits TEK to contacts with the extracellular matrix, leading to the formation of focal adhesion complexes, activation of PTK2/FAK and of the downstream kinases MAPK1/ERK2 and MAPK3/ERK1, and ultimately to the stimulation of sprouting angiogenesis. ANGPT1 signaling triggers receptor dimerization and autophosphorylation at specific tyrosine residues that then serve as binding sites for scaffold proteins and effectors. Signaling is modulated by ANGPT2 that has lower affinity for TEK, can promote TEK autophosphorylation in the absence of ANGPT1, but inhibits ANGPT1-mediated signaling by competing for the same binding site. Signaling is also modulated by formation of heterodimers with TIE1, and by proteolytic processing that gives rise to a soluble TEK extracellular domain. The soluble extracellular domain modulates signaling by functioning as decoy receptor for angiopoietins. TEK phosphorylates DOK2, GRB7, GRB14, PIK3R1, SHC1 and TIE1. The chain is Angiopoietin-1 receptor (TEK) from Bos taurus (Bovine).